The chain runs to 2647 residues: Filamin-A (2647 aa).

The segment at 1–37 (MSSSHSRCGQSAAVASPGGSIDSRDAEMPATEKDLAE) is disordered. The residue at position 2 (serine 2) is an N-acetylserine. The segment at 2–274 (SSSHSRCGQS…PKAKLKPGAP (273 aa)) is actin-binding. Phosphoserine is present on residues serine 11, serine 16, and serine 20. Positions 22–37 (DSRDAEMPATEKDLAE) are enriched in basic and acidic residues. Glycyl lysine isopeptide (Lys-Gly) (interchain with G-Cter in ubiquitin) cross-links involve residues lysine 42, lysine 43, and lysine 135. 2 consecutive Calponin-homology (CH) domains span residues 43–149 (KIQQ…LHYS) and 166–269 (QTPK…KAKL). Residues 271–294 (PGAPLRPKLNPKKARAYGPGIEPT) form a disordered region. 15 Filamin repeats span residues 276 to 374 (RPKL…EVYV), 376 to 474 (KSQG…TVTV), 475 to 570 (GQAC…EVKV), 571 to 663 (GTEC…MADI), 667 to 763 (PQDF…RVNV), 764 to 866 (GAGS…RVKV), 867 to 965 (EPSH…SVGV), 966 to 1061 (SPSL…PLEA), 1062 to 1154 (VAPT…KAHV), 1155 to 1249 (APCF…KLQV), 1250 to 1349 (EPAV…QVPV), 1350 to 1442 (TEGC…KVPV), 1443 to 1539 (HDVT…KVKV), 1540 to 1636 (LPTH…RVRA), and 1641 to 1740 (DASK…QVTA). A Glycyl lysine isopeptide (Lys-Gly) (interchain with G-Cter in SUMO1); alternate cross-link involves residue lysine 299. Lysine 299 participates in a covalent cross-link: Glycyl lysine isopeptide (Lys-Gly) (interchain with G-Cter in SUMO2); alternate. An N6-acetyllysine mark is found at lysine 376 and lysine 508. Lysine 700, lysine 781, lysine 837, lysine 865, and lysine 906 each carry N6-acetyllysine. A phosphoserine mark is found at serine 968 and serine 1055. N6-acetyllysine; alternate is present on lysine 1071. Lysine 1071 bears the N6-succinyllysine; alternate mark. Serine 1084 carries the post-translational modification Phosphoserine. The residue at position 1089 (threonine 1089) is a Phosphothreonine. Phosphoserine occurs at positions 1301 and 1338. The residue at position 1372 (lysine 1372) is an N6-acetyllysine. Residues serine 1459 and serine 1533 each carry the phosphoserine modification. The segment at 1490–1607 (PKGLVEPVDV…DNHDGTYTVA (118 aa)) is interaction with furin. At lysine 1538 the chain carries N6-acetyllysine. Residues serine 1630 and serine 1734 each carry the phosphoserine modification. The tract at residues 1741 to 1778 (LAGDQPTVQTPLRSQQLAPQYNYPQGSQQTWIPERPMV) is hinge 1. Phosphothreonine is present on threonine 1750. 8 Filamin repeats span residues 1765–1860 (QGSQ…QFYV), 1861–1952 (DYVN…TARV), 1953–2039 (TGDD…PVVI), 2042–2134 (SEIG…SVKV), 2135–2230 (TGEG…QFTV), 2233–2325 (LGEG…VVPV), 2327–2420 (SPSG…KIRV), and 2424–2516 (GHGG…KAKV). Serine 1835 is modified (phosphoserine). 10 positions are modified to phosphoserine: serine 1967, serine 2053, serine 2128, serine 2152, serine 2158, serine 2163, serine 2180, serine 2284, serine 2327, and serine 2329. At threonine 2336 the chain carries Phosphothreonine. 6 positions are modified to phosphoserine: serine 2338, serine 2370, serine 2414, serine 2510, serine 2523, and serine 2526. Residues 2517–2553 (TGPRLVSNHSLHETSSVFVDSLTKVATVPQHATSGPG) are hinge 2. The interval 2517–2647 (TGPRLVSNHS…PGSPYRIMVP (131 aa)) is self-association site, tail. A Filamin 24 repeat occupies 2552–2646 (PGPADVSKVV…IPGSPYRIMV (95 aa)). Lysine 2569 carries the N6-acetyllysine; alternate modification. Lysine 2569 carries the N6-succinyllysine; alternate modification. Lysine 2575 bears the N6-acetyllysine mark. Position 2599 is a phosphothreonine (threonine 2599). N6-acetyllysine occurs at positions 2607 and 2621.

It belongs to the filamin family. Homodimer. Interacts with FCGR1A, FLNB, FURIN, HSPB7, KCND2, INPPL1, MYOT, MYOZ1, PDLIM2, ARHGAP24, PSEN1, PSEN2 and ECSCR. Also interacts with various other binding partners in addition to filamentous actin. Interacts (via N-terminus) with TAF1B. Interacts (via N-terminus) with MIS18BP1 (via N-terminus). Interacts with TMEM67 (via C-terminus) and MKS1. Interacts (via actin-binding domain) with MICALL2 (via calponin-homology (CH) domain). Interacts with RFLNA and RFLNB. Interacts (via filamin repeat 5) with SYK; docks SYK to the plasma membrane. Interacts (via filamin repeats 19 and 21) with DRD3; increased PKA-mediated phosphorylation at Ser-2152. Interacts (via filamin repeat 21) with MAS1, AGTR1 and ADRA1D; increases PKA-mediated phosphorylation of FLNA at Ser-2152. Interacts (via filamin repeats 4, 9, 12, 17, 19, 21, and 23) with GP1BA (high affinity), ITGB7, ITGB2 and FBLIM1. Interacts with CEACAM1 (via cytoplasmic domain); inhibits cell migration and cell scattering by interfering with the interaction between FLNA and RALA. Interacts with FOXC1. Interacts (via calponin-homology (CH) domain 1 and filamin repeat 24) with CRMP1; the interaction alters FLNA ternary structure and thus promotes FLNA dissociation from F-actin. Interacts with DPYSL3/CRMP3 and DPYSL4/CRMP4. In terms of processing, phosphorylation at Ser-2152 is negatively regulated by the autoinhibited conformation of filamin repeats 19-21. Ligand binding induces a conformational switch triggering phosphorylation at Ser-2152 by PKA. Post-translationally, polyubiquitination in the CH1 domain by a SCF-like complex containing ASB2 leads to proteasomal degradation. Prior dissociation from actin may be required to expose the target lysines. Ubiquitinated in endothelial cells by RNF213 downstream of the non-canonical Wnt signaling pathway, leading to its degradation by the proteasome. Widely expressed. Highly expressed in Purkinje cells.

Its subcellular location is the cytoplasm. The protein localises to the cell cortex. It is found in the cytoskeleton. It localises to the perikaryon. The protein resides in the cell projection. Its subcellular location is the growth cone. The protein localises to the podosome. Actin binding protein that promotes orthogonal branching of actin filaments and links actin filaments to membrane glycoproteins. Anchors various transmembrane proteins to the actin cytoskeleton and serves as a scaffold for a wide range of cytoplasmic signaling proteins. Interaction with FLNB may allow neuroblast migration from the ventricular zone into the cortical plate. Tethers cell surface-localized furin, modulates its rate of internalization and directs its intracellular trafficking. Involved in ciliogenesis. Plays a role in cell-cell contacts and adherens junctions during the development of blood vessels, heart and brain organs. Plays a role in platelets morphology through interaction with SYK that regulates ITAM- and ITAM-like-containing receptor signaling, resulting in by platelet cytoskeleton organization maintenance. During the axon guidance process, required for growth cone collapse induced by SEMA3A-mediated stimulation of neurons. The protein is Filamin-A (Flna) of Mus musculus (Mouse).